The chain runs to 499 residues: Centrosomal protein of 57 kDa (499 aa).

Residues 1–35 show a composition bias toward polar residues; sequence MAAASVSETSASQFSNILAEPSKSNGSMVRHSSSP. The interval 1–58 is disordered; that stretch reads MAAASVSETSASQFSNILAEPSKSNGSMVRHSSSPYVVYPPDKPFLNSDLRRSPNKPT. S53 is modified (phosphoserine). Residues 58 to 239 form a centrosome localization domain (CLD) region; it reads TFAYPESNSR…KAAQLQTGLE (182 aa). Residues 63–241 adopt a coiled-coil conformation; the sequence is ESNSRAIFSA…AQLQTGLEVN (179 aa). The tract at residues 277-490 is mediates interaction with microtubules; sequence AVQPHYRLCL…KDMQSIQNSL (214 aa). Disordered stretches follow at residues 334-357 and 431-476; these read KQVS…SVNE and KQKK…SRKN. The span at 346–357 shows a compositional bias: low complexity; it reads SATPPSSSSVNE. The stretch at 389–450 forms a coiled coil; that stretch reads TVELKDNLEC…KTLDEEGNSS (62 aa). Basic and acidic residues predominate over residues 431-444; it reads KQKKELKATRKTLD. The span at 449–459 shows a compositional bias: low complexity; it reads SSSRSTTTGTT. Residues 460 to 474 show a composition bias toward basic and acidic residues; that stretch reads NKKDFAKPRPGEKSR.

Belongs to the translokin family. As to quaternary structure, homodimer and homooligomer. Interacts with FGF2 and RAP80. Does not interact with FGF1 or FGF2 isoform 24 kDa. Interacts with microtubules.

The protein resides in the nucleus. Its subcellular location is the cytoplasm. It is found in the cytoskeleton. It localises to the microtubule organizing center. The protein localises to the centrosome. In terms of biological role, centrosomal protein which may be required for microtubule attachment to centrosomes. May act by forming ring-like structures around microtubules. Mediates nuclear translocation and mitogenic activity of the internalized growth factor FGF2. The chain is Centrosomal protein of 57 kDa (CEP57) from Bos taurus (Bovine).